A 300-amino-acid polypeptide reads, in one-letter code: Cholesterol 25-hydroxylase-like protein (300 aa).

N-linked (GlcNAc...) asparagine glycosylation occurs at Asn-9. The next 3 membrane-spanning stretches (helical) occupy residues 43–63 (LFPP…FTFI), 95–115 (LQGW…LIWV), and 130–152 (MVSQ…HYFN). Positions 135–266 (AIFFLAFDFT…WFNYLDRLMG (132 aa)) constitute a Fatty acid hydroxylase domain. The Histidine box-1 signature appears at 148–152 (FHYFN). Residues 163–167 (HSVHH) carry the Histidine box-2 motif. A helical membrane pass occupies residues 180–200 (LHPFELFFVATFITTVPWIFP). The Histidine box-3 signature appears at 242 to 248 (AHDMHHL).

This sequence belongs to the sterol desaturase family. It depends on Fe cation as a cofactor.

The protein localises to the membrane. In terms of biological role, probable sterol desaturase. The protein is Cholesterol 25-hydroxylase-like protein of Caenorhabditis briggsae.